Here is a 216-residue protein sequence, read N- to C-terminus: Elongation factor Ts (216 aa).

The interval T80–V83 is involved in Mg(2+) ion dislocation from EF-Tu.

Belongs to the EF-Ts family.

It is found in the cytoplasm. In terms of biological role, associates with the EF-Tu.GDP complex and induces the exchange of GDP to GTP. It remains bound to the aminoacyl-tRNA.EF-Tu.GTP complex up to the GTP hydrolysis stage on the ribosome. The protein is Elongation factor Ts of Alkaliphilus oremlandii (strain OhILAs) (Clostridium oremlandii (strain OhILAs)).